A 1082-amino-acid polypeptide reads, in one-letter code: Neisserial autotransporter lipoprotein NalP (1082 aa).

The signal sequence occupies residues 1 to 27 (MRTTPTFPTKTFKPTAMALAVATTLSA). C28 carries N-palmitoyl cysteine lipidation. C28 carries S-diacylglycerol cysteine lipidation. A Peptidase S8 domain is found at 110–482 (NDAYKNLINL…WGLLDAGKAM (373 aa)). Active-site charge relay system residues include D138, H210, and S426. The Autotransporter domain maps to 808–1082 (DGLDHNGTGL…SGRVGVGYRF (275 aa)).

Belongs to the peptidase S8 family. Post-translationally, probably auto-processes to yield a 68-70 kDa form and a C-terminal 30 kDa translocator domain; upon overexpression in situ and in E.coli full-length protein is seen as well as (probably) auto-processed forms of 68-70 kDa and 30 kDa in size, suggesting this may have protease activity.

It is found in the cell outer membrane. It localises to the cell surface. The protein localises to the secreted. The protein resides in the host cytoplasm. Its subcellular location is the host perinuclear region. Cleavage of host complement factor C3 is inhibited by PMSF. Major human immunogenic protein, detected in patients recovering from meningitidis. Autotransporter with a secreted protease domain involved in processing other autotransporter proteins including App, IgA, LbpB and NHBA. Probably autoprocesses to release the about 70 kDa passenger domain. Both cell surface protein (Neisserial autotransporter lipoprotein NalP) and the passenger domain cleave human (host) complement factor C3, generating a shorter alpha chain and a longer beta chain than normal. Uptake of a passenger domain fragment (residues 101-784) by human cells increases cell metabolic activity; the serine protease activity is required for this increase. In terms of biological role, cleaves human (host) complement factor C3, generating a shorter alpha chain and a longer beta chain than normal. Does not act on mouse or rabbit C3. Cleavage causes C3b degradation by human CFI and CFH, and thus decreases deposition of C3b on the bacteria surface and probably facilitates complement escape. Its function is as follows. Plays a role in extracellular-DNA (eDNA) mediated biofilm formation. In some strains (including cc32 strain MC58) eDNA stimulates biofilm formation. When NalP is not expressed (and no longer processes NHBA or IgA) biofilm formation increases. The chain is Neisserial autotransporter lipoprotein NalP from Neisseria meningitidis serogroup B (strain ATCC BAA-335 / MC58).